The chain runs to 202 residues: MAMATRAIRYQLPSPRFRAPRCESSEPIKQIQIQQRPRGGDLAENGKIVLQPRLCTLRSYGSDMVIAKKDGGDGGGGGSDVELASPFFETLTDYIESSKKSQDFETISGRLAMIVFAVTVTEEIVTGNSLFKKLDVEGLSEAIGAGLAAMGCAAMFAWLTISRNRVGRIFTVSCNSFIDSLVDQIVDGLFYDTKPSDWSDDL.

The N-terminal 60 residues, 1–60, are a transit peptide targeting the chloroplast; that stretch reads MAMATRAIRYQLPSPRFRAPRCESSEPIKQIQIQQRPRGGDLAENGKIVLQPRLCTLRSY. Helical transmembrane passes span 111–131 and 142–162; these read LAMI…NSLF and AIGA…LTIS.

The protein belongs to the ELIP/psbS family.

The protein localises to the plastid. The protein resides in the chloroplast thylakoid membrane. In terms of biological role, may be involved in non-photochemical quenching, a process that maintains the balance between dissipation and utilization of light energy to minimize generation of oxidizing molecules, thereby protecting the plant against photo-oxidative damage. May play a photoprotective role in the thylakoid membrane in response to light stress. The sequence is that of Stress enhanced protein 2, chloroplastic from Arabidopsis thaliana (Mouse-ear cress).